The following is a 337-amino-acid chain: Protein-glutamate methylesterase/protein-glutamine glutaminase of group 3 operon (337 aa).

The region spanning 2-119 is the Response regulatory domain; the sequence is KIAIVNDMPL…GDAREAAAPL (118 aa). At Asp53 the chain carries 4-aspartylphosphate. Residues 144 to 337 enclose the CheB-type methylesterase domain; sequence PLREASQRRG…AGRLTEFFAK (194 aa). Catalysis depends on residues Ser160, His187, and Asp280.

The protein belongs to the CheB family. In terms of processing, phosphorylated by CheA. Phosphorylation of the N-terminal regulatory domain activates the methylesterase activity.

It is found in the cytoplasm. It carries out the reaction [protein]-L-glutamate 5-O-methyl ester + H2O = L-glutamyl-[protein] + methanol + H(+). The enzyme catalyses L-glutaminyl-[protein] + H2O = L-glutamyl-[protein] + NH4(+). Involved in chemotaxis. Part of a chemotaxis signal transduction system that modulates chemotaxis in response to various stimuli. Catalyzes the demethylation of specific methylglutamate residues introduced into the chemoreceptors (methyl-accepting chemotaxis proteins or MCP) by CheR. Also mediates the irreversible deamidation of specific glutamine residues to glutamic acid. The sequence is that of Protein-glutamate methylesterase/protein-glutamine glutaminase of group 3 operon from Pseudomonas putida (strain ATCC 47054 / DSM 6125 / CFBP 8728 / NCIMB 11950 / KT2440).